Here is a 612-residue protein sequence, read N- to C-terminus: Baculoviral IAP repeat-containing protein 2 (612 aa).

The BIR 1 repeat unit spans residues 46 to 113 (ELYRMSTYSA…RQFYPSCSFV (68 aa)). Arg-143 carries the omega-N-methylarginine modification. A Phosphoserine modification is found at Ser-153. BIR repeat units lie at residues 177-243 (EEAR…CPFL) and 262-329 (HSAR…CEFL). Residues Cys-299, Cys-302, His-319, and Cys-326 each coordinate Zn(2+). The CARD domain occupies 447–537 (MASGDLSLIR…TLYENLFVEK (91 aa)). Residues 565–600 (CKVCMDREVSIVFIPCGHLVVCQECAPSLRKCPICR) form an RING-type zinc finger.

This sequence belongs to the IAP family. In terms of assembly, interacts with DIABLO/SMAC and with PRSS25; these interactions inhibit apoptotic suppressor activity. Interacts with CASP9. Interacts (via BIR domains) with TRAF2; the interaction is required for IKBKE ubiquitination. Interacts with E2F1, RIPK1, RIPK2, RIPK3, RIPK4, BIRC5/survivin and USP19. Interacts with HSP90AB1. Interacts with several death receptors, inclusing FAS, TNFRSF10A and TNFRSF10B. Recruited to TNFRSF10B in the absence of receptor stimulation. When TNFRSF10B is stimulated, further recruited to the receptor and cleaved by caspases. Proteolytic fragments remain associated with TNFRSF10B. In terms of processing, auto-ubiquitinated and degraded by the proteasome in apoptotic cells. Upon stimulation of death receptors, including TNFRSF10B, recruited to receptors and cleaved by caspases. Proteolytic fragments remain associated with the receptors. This cleavage presumably inactivates the protein. Expressed in heart, brain, spleen, lung, liver, skeletal muscle, kidney and testis.

The protein resides in the cytoplasm. It localises to the nucleus. The catalysed reaction is S-ubiquitinyl-[E2 ubiquitin-conjugating enzyme]-L-cysteine + [acceptor protein]-L-lysine = [E2 ubiquitin-conjugating enzyme]-L-cysteine + N(6)-ubiquitinyl-[acceptor protein]-L-lysine.. The CARD domain inhibits the activation of E3 ubiquitin ligase activity by preventing RING domain dimerization and E2 ubiquitin donor binding and activation. The CARD domain-mediated autoinhibition of the E3 ubiquitin-protein ligase activity suppresses cell proliferation and migration. USP19 regulates the stability of BIRC2/c-IAP1 by preventing its ubiquitination. In terms of biological role, multi-functional protein which regulates not only caspases and apoptosis, but also modulates inflammatory signaling and immunity, mitogenic kinase signaling, and cell proliferation, as well as cell invasion and metastasis. Acts as an E3 ubiquitin-protein ligase regulating NF-kappa-B signaling and regulates both canonical and non-canonical NF-kappa-B signaling by acting in opposite directions: acts as a positive regulator of the canonical pathway and suppresses constitutive activation of non-canonical NF-kappa-B signaling. The target proteins for its E3 ubiquitin-protein ligase activity include: RIPK1, RIPK2, RIPK3, RIPK4, CASP3, CASP7, CASP8, TRAF2, DIABLO/SMAC, MAP3K14/NIK, MAP3K5/ASK1, IKBKG/NEMO, IKBKE and MXD1/MAD1. Can also function as an E3 ubiquitin-protein ligase of the NEDD8 conjugation pathway, targeting effector caspases for neddylation and inactivation. Acts as an important regulator of innate immune signaling via regulation of Toll-like receptors (TLRs), Nodlike receptors (NLRs) and RIG-I like receptors (RLRs), collectively referred to as pattern recognition receptors (PRRs). Protects cells from spontaneous formation of the ripoptosome, a large multi-protein complex that has the capability to kill cancer cells in a caspase-dependent and caspase-independent manner. Suppresses ripoptosome formation by ubiquitinating RIPK1 and CASP8. Can stimulate the transcriptional activity of E2F1. Plays a role in the modulation of the cell cycle. This is Baculoviral IAP repeat-containing protein 2 (Birc2) from Mus musculus (Mouse).